A 189-amino-acid polypeptide reads, in one-letter code: dCTP deaminase (189 aa).

DCTP contacts are provided by residues 112-117 (KSTYAR), 136-138 (TLE), glutamine 157, tyrosine 171, and glutamine 181. The Proton donor/acceptor role is filled by glutamate 138.

Belongs to the dCTP deaminase family. As to quaternary structure, homotrimer.

The enzyme catalyses dCTP + H2O + H(+) = dUTP + NH4(+). Its pathway is pyrimidine metabolism; dUMP biosynthesis; dUMP from dCTP (dUTP route): step 1/2. Functionally, catalyzes the deamination of dCTP to dUTP. The protein is dCTP deaminase of Halorhodospira halophila (strain DSM 244 / SL1) (Ectothiorhodospira halophila (strain DSM 244 / SL1)).